We begin with the raw amino-acid sequence, 184 residues long: Ribosome maturation factor RimM (184 aa).

The PRC barrel domain maps to 105 to 184 (EDEFYWRELF…RIEVDWDPAF (80 aa)).

It belongs to the RimM family. In terms of assembly, binds ribosomal protein uS19.

It is found in the cytoplasm. In terms of biological role, an accessory protein needed during the final step in the assembly of 30S ribosomal subunit, possibly for assembly of the head region. Essential for efficient processing of 16S rRNA. May be needed both before and after RbfA during the maturation of 16S rRNA. It has affinity for free ribosomal 30S subunits but not for 70S ribosomes. The polypeptide is Ribosome maturation factor RimM (Vibrio cholerae serotype O1 (strain ATCC 39541 / Classical Ogawa 395 / O395)).